The primary structure comprises 144 residues: Large ribosomal subunit protein uL15 (144 aa).

Residues 1–54 (MRLNTLSPAPGRVTSRKRVGRGIGSGLGKTAGRGHKGLKSRSGGTVKPGFEGGQ) form a disordered region. Residues 21 to 31 (RGIGSGLGKTA) are compositionally biased toward gly residues.

The protein belongs to the universal ribosomal protein uL15 family. As to quaternary structure, part of the 50S ribosomal subunit.

Binds to the 23S rRNA. This is Large ribosomal subunit protein uL15 from Teredinibacter turnerae (strain ATCC 39867 / T7901).